The following is a 1260-amino-acid chain: MALIRRAKNKVAPQKRAETTIKKATFDATKKKEVGVSDLTLLSSISDDAINQNLKKRFENGTIYTYIGHVLISVNPFRDLGIYTDAVLESYKGKNRLEVPPHVFAIAEAMYYNLKAYNENQCVIISGESGAGKTEAAKRIMQYIAAASSTHEASIGKIKDMVLATNPLLESFGCAKTLRNNNSSRHGKYLEIRFNEQFEPCAGQITNYLLEKQRVVGQIRNERNFHIFYQFTKGASDTYRQNFGVLQPDQYIYTSASGCTSVDTIDDLHDYQETIKAMQVIGLSQEEQDQIFRMLSAILWIGNVTFVENNEGNAEVRDTSVTDFVAYLMQVDSGLLIKCLVERVMETGHGSRRGSVYHVPLNVVQATAVRDALAKAIYNNLFDWIVDRVNVSLKAFPGAVKSIGILDIYGFEIFEHNSFEQICINYVNEKLQQIFIQLTLKSEQEEYNKEQIQWTPIKYFDNKVVCDLIESKRPPGIFATLDDSVATAHADSNAADQAFAQRLNLFSTNAHFDLRSSKFVIKHYAGDVTYDISGMTDKNKDQLVKDLAELVQTTTNPFLSTIFPDTIDKSSKRRPPTAGNKIIKSANELVETLSKAQPSYIRTIKPNQTKSPRDYDDQQVLHQVKYLGLQENVRIRRAGFAYRQTFEKFVERFYLLSPKCSYAGDYTWQGDTLGAVKQILQDASIPTTEYQLGVTKVFIKTPETLFALEHMRDRYWYNMAARIQRAWRRFIQRRIDSAIKIQRAIREKKGGNQYEQLRDYGHRLLGGRKERRAMSLLGYRAFMGDYLSCNEMKSKGAFIKRQAGISEIVVFSIKGEALHSKFGRSAVRLPITIILTPTTLYIVGQTVAQNQVSYTVDRKVNISHIKHVSLTNLADDWVGIYVQGENLPDPFINTIFKTELITHLKQLNRAIEVKIGPTIEYQKKPGKLHTVKCQISESAPKYSDIYKSSTISVRQGRPANSRQAPKPEKKSTLLSDGPSYNSNQSKGYGQQQHAQPSYGQQQQQQQRYAPQSHATPQTTQKKRAPPPPGQQNFAASAAQTAYHPQQASHARVPSTNNAHTQHNRQPAQQAAQPVQQAAQPAATTSQPTRRVAPPPPPPPPTKQNIPKFQAAYDFTGTGSASELPLSKGTVITVSKQDPSGWSLGKLLDGSKEGWVPTNYIVEYKESSGPPPPPAPPVASSTTGYANSNNNAFAANDNVAAVAGAAAGATAGAAVAAASLANPGQNAFSVGLADALAARANTMRLESDDESTGNADEDDDW.

The Myosin motor domain occupies 34–713 (VGVSDLTLLS…TLFALEHMRD (680 aa)). 127 to 134 (GESGAGKT) lines the ATP pocket. S355 carries the post-translational modification Phosphoserine. Residues 402–484 (SIGILDIYGF…PGIFATLDDS (83 aa)) form an actin-binding region. IQ domains follow at residues 717–737 (YNMA…RIDS) and 738–763 (AIKI…YGHR). Residues 769–959 (KERRAMSLLG…TISVRQGRPA (191 aa)) form the TH1 domain. 2 stretches are compositionally biased toward polar residues: residues 948–963 (SSTI…NSRQ) and 972–988 (TLLS…SKGY). The disordered stretch occupies residues 948 to 1106 (SSTISVRQGR…PPPPTKQNIP (159 aa)). Residues 989–1013 (GQQQHAQPSYGQQQQQQQRYAPQSH) are compositionally biased toward low complexity. The span at 1030–1064 (QQNFAASAAQTAYHPQQASHARVPSTNNAHTQHNR) shows a compositional bias: polar residues. A compositionally biased stretch (low complexity) spans 1065–1082 (QPAQQAAQPVQQAAQPAA). Over residues 1092 to 1101 (APPPPPPPPT) the composition is skewed to pro residues. The SH3 domain maps to 1103–1165 (QNIPKFQAAY…PTNYIVEYKE (63 aa)).

It belongs to the TRAFAC class myosin-kinesin ATPase superfamily. Myosin family. Post-translationally, phosphorylation of the TEDS site (Ser-355) is required for the polarization of the actin cytoskeleton. Phosphorylation probably activates the myosin-I ATPase activity.

It localises to the cytoplasm. The protein resides in the cytoskeleton. The protein localises to the actin patch. Its function is as follows. Type-I myosin implicated in the organization of the actin cytoskeleton. Required for proper actin cytoskeleton polarization. At the cell cortex, assembles in patch-like structures together with proteins from the actin-polymerizing machinery and promotes actin assembly. Functions as actin nucleation-promoting factor (NPF) for the Arp2/3 complex. The chain is Myosin-1 (MYO1) from Kluyveromyces lactis (strain ATCC 8585 / CBS 2359 / DSM 70799 / NBRC 1267 / NRRL Y-1140 / WM37) (Yeast).